A 56-amino-acid polypeptide reads, in one-letter code: Ferredoxin (56 aa).

2 4Fe-4S ferredoxin-type domains span residues 2–28 (AYKI…SQGD) and 29–56 (SIFV…PVQE). [4Fe-4S] cluster is bound by residues Cys9, Cys12, Cys15, Cys19, Cys38, Cys41, Cys44, and Cys48.

[4Fe-4S] cluster is required as a cofactor.

Functionally, ferredoxins are iron-sulfur proteins that transfer electrons in a wide variety of metabolic reactions. The sequence is that of Ferredoxin from Clostridium pasteurianum.